A 310-amino-acid chain; its full sequence is HTH-type transcriptional activator TtdR (310 aa).

Positions 6-63 constitute an HTH lysR-type domain; that stretch reads PLAKDLQVLVEIVHSGSFSAAAATLGQTPAFVTKRIQILENTLATTLLNRSARGVALT. The segment at residues 23–42 is a DNA-binding region (H-T-H motif); that stretch reads FSAAAATLGQTPAFVTKRIQ.

This sequence belongs to the LysR transcriptional regulatory family.

Functionally, positive regulator required for L-tartrate-dependent anaerobic growth on glycerol. Induces expression of the ttdA-ttdB-ygjE operon. This Escherichia coli (strain K12) protein is HTH-type transcriptional activator TtdR (ttdR).